A 618-amino-acid chain; its full sequence is Glutathione-regulated potassium-efflux system protein (618 aa).

A run of 12 helical transmembrane segments spans residues 6–26, 32–52, 55–75, 94–114, 118–138, 152–172, 186–206, 227–247, 274–294, 298–318, 336–356, and 362–382; these read NPELMKVVILLASSVTIVPLF, GSVLGYLVAGCLIGPSVFGIV, PTAVVHLAELGVVMFLFIIGL, LLQVGLCGCLLTFSGIYLLGL, VSFIAGMGFTLSSTAIVMQSL, VISTLIFEDIAIVPLLASVAF, WVSIGIALSAVVGLIVTGKWL, ALLVVLGAALAMEIGGLSMAM, GLLLGLFFMGVGMSLDLHLVF, ILLLGIVFLYILGKASAVYII, MAHGGEFAFVLFSAAATAEVI, and ATFTAAVIISMLFSPIIAQIA. Positions 409–525 constitute an RCK N-terminal domain; that stretch reads EDNVLVIGFG…LIKQDVDFIV (117 aa).

The protein belongs to the monovalent cation:proton antiporter 2 (CPA2) transporter (TC 2.A.37) family.

It is found in the cell inner membrane. In terms of biological role, transport system that facilitate potassium-efflux, possibly by potassium-proton antiport. The chain is Glutathione-regulated potassium-efflux system protein (kefBC) from Haemophilus influenzae (strain ATCC 51907 / DSM 11121 / KW20 / Rd).